The sequence spans 7079 residues: MESLALGVSEKTHVQLSLPVLQVRDVLVRGFGDSVEEALAEAREHLKNGTCGLVELEKGVLPQLEQPYVFIKRSDAQGTNHGYKVVELVAELDGIQYGRSGTTLGVLVPHVGETPVAYRNVLLRKNGNKGAGGHSYGIDLKSYDLGVELGTDPIEDYEQNWNTKHGGGVLRELIRELNGGAFTRYVDNNFCGPDGYPLECIKDLLARAGKSMCTLSEQLDYIESKRGVYCCREHEHEIVWFTERSEKSYERQTPFEIKSAKKFDTFKGECPKFVFPLNSKVKVIQPRVEKKKTEGFMGRIRSVYPVATPQECNDMHLSTLMKCNHCDEVSWQTCDFLKATCEQCGTENLVCEGPTTCGYLPANAVVKMPCPACQDPEVGPEHSVADYHNHSNIETRLRKGGRTKCFGGCVFAYVGCYNKRAYWVPRASANIGASHTGITGDNVETLNEDLMEILNRDRVNINIVGDFHLNEEVAIILASFSASTCAFVDTVKGLDYKTFKDIVESCGNFKVTRGRAKKGAWNIGQEKSILTPLYGFPSQAAGVIRSIFTRALDTANHSIPDLQRAAITILDGISEQSLRLIDAMVYTSDLLTNSVIVMAYVTGGLVQQITQWLSNMLGTTVDKLKPVFTWVEAKLSAGIEFLRDAWEILKFLVTGVFDIVKGQIQVASDNLKECVKAFLDVLNKALEMCIDQVIIAGAKLRTLNLGEVFIAQSKGLYRQCIRGKEQLQLLMPLRAPKEVTFFEGDSHDTVFTSEEVVLKNGELEALETPVDSFTNGAVIGTPVCVNGLMLLELKDKEQYCALSPGLLATNNVFSLKGGAPVKGVTFGEDTVLEVQGYKNVKITFELDERVDKVLNEKCSVYTVESGTEVTEFACVVAEAVVKTLQPVSDLLTNMGIDLDEWSVATFYLFDDAGEEKLSSRMYCSFYPPDEEEDCEEYEDEEEIPEETCEHEYGTEDDYKGLPLEFGASTEIQQVDEEEEEDWLEEAIAAKPEPEPLPEEPVNQFTGYLKLTDNVAIKCVDIVKEAQHAKPTVIVNAANVHLKHGGGVAGALNKATNGAMQQESDDYIKKNGPLTVGGSCLLSGHNLAKKCMHVVGPNLNAGEDVQLLKAAYANFNSQDVLLAPLLSAGIFGAKPLQSLKMCVETVRTQVYFAVNDQDLYDHVVLGYLDSLKPKVETPTQENLELKEQPAVETLTQENLELEELPVIEKPVDVKFKARIEEVNTSLEETKFLTSRLLLFADINGKLYQDSQNMLRGEDMFFLEKDAPYIVGDVISSGDITCVIIPAKKAGGTTEMLAKALKKVPVSEYITTYPGQGCAGYTLEEAKTALRKCKSVFYVLPSKTPNDKEEILGTVSWNLREMLAHAEETRKLMLICMDVKALMSTIHRRYKGIKVQEGIVDYGVRFFFYTSKEPVASIITKLNLLNEPLVTMPIGYVTHGLNLEEAARCMRSLKAPAVVSVSSPDAVTTYNGYLTSSSKTSEEHFIETVSLAGMYRDWSYSGQRTELGVEFLKRGDKVVYHTVGSPIQFHLDGEVLLLDKLKSLLSLREVRTIKVFTTVDNTNLHTQIVDMSMTYGQQFGPTYLDGADVTKIKPHAKHEGKTFFVLPSDDTLRSEAFEYYHTLDESFLGRYMSALNHTKKWKFPQIGGLTSIKWADNNCYLSSVLLALQQIEVKFNAPALQEAYYRARAGDAANFCALILAYSNRTVGELGDVRETMTHLLQHANLESAKRVLNVVCKTCGQKSTTLTGVEAVMYMGTLSYEELKTGVTIPCICGRDATQYLVQQESSFVMMSAPPSEYTLQQGAFLCANEYTGSYQCGHYTHVTVKETLYRIDGAYLTKMSEYKGPVTDVFYKEISYTTTIKPVSYKLDGVIYTEIQPKLDEYYKKDNAYYTEQPIDLVPTQPLPNASFDNFKLTCSNTKFADDLNQMTGFKKPASRELSVTFFPDLNGDVVAIDYRHYSASFKKGAKLLHKPIIWHINQTTNKTTYKPNTWCLRCLWSTKPVETSNSFEVLEVEDTQGMDNLACESQTPTSEEVVENPTIQKEVIECDVKTIEVVGNVILKPSEEGVKVTQELGHEDLMAAYVEETSITIKKPNELSLALGLRTLATHGAAAINSVPWSKILAYVKPFLGQAAVTTTNCIKRCVQRVFNNYMPYVITLLFQLCTFTRSTNSRIRASLPTTIAKNSVKSVAKLCLDVCINYVKSPKFSKLFTIAMWLLLLSICLGSLIYVTAAFGVLLSNLGIPSYCDGVRESYVNSSNVTTMDFCEGSFLCSVCLNGLDSLDSYPALETIQVTISSYKLDLTSLGLAAEWFLAYMLFTKFFYLLGLSAIMQVFFGYFASHFISNSWLMWFIISIVQMAPVSAMVRMYIFFAFCYYVWKSYVHIMDGCTSSTCMMCYKRNRATRVECTTIVNGMKRSFYVYANGGRGFCKAHNWNCLNCDTFCAGSTFISDEVARDLSLQFKRPINPTDQSSYVVDSVAVKNGALHLYFDKAGQKTYERHPLSHFVNLDNLRANNTKGSLPINVIVFDGKSKCDESAAKSASVYYSQLMCQPILLLDQALVSDVGDSTEVSVKMFDAYVDTFSATFSVPMEKLKALVATAHSELAKGVALDGVLSTFVSAARQGVVDTDVDTKDVIECLKLSHHSDLEVTGDSCNNFMLTYNKVENMTPRDLGACIDCNARHINAQVAKSHNVSLIWNVKDYMSLSEQLRKQIRSAAKKNNIPFRLTCATTRQVVNAITTKISLKGGKIVSTWFKLMLKATLLCVLAALFCYIIMPVHSLSVHDGYTNEIIGYKAIQDGVTRDIMATDDCFANKHAGFDSWFSQRGGSYRNDKSCPVVAAIITREIGFIVPGLPGTVLRAINGDFLHFLPRVFSAVGNICYTPSKLIEYSDFATSACVLAAECTIFKDAMGKPVPYCYDTNLLEGSISYSELRPDTRYVLMDGSIIQFPNTYLEGSVRVVTTFDAEYCRHGTCERSEAGVCLSTSGRWVLNNEHYRALPGVFCGVDAMNLIANIFTPLVQPVGALDVSASVVAGGIIAILVTCAAYYFMKFRRAFGEYNHVVAANALLFLMSFTILCLAPAYSFLPGVYSIFYLYLTFYFTNDVSFLAHLQWFAMFSPIVPFWITAIYVFCISLKHCHWFFNNYLRKRVMFNGVTFSTFEEAALCTFLLNKEMYLKLRSETLLPLTQYNRYLALYNKYKYFSGALDTTSYREAACCHLAKALNDFSNSGADVLYQPPQTSITSAVLQSGFRKMAFPSGKVEGCMVQVTCGTTTLNGLWLDDTVYCPRHVICTAEDMLNPNYEDLLIRKSNHSFLVQAGNVQLRVIGHSMQNCLLRLKVDTSNPKTPKYKFVRIQPGQTFSVLACYNGSPSGVYQCAMRPNYTIKGSFLNGSCGSVGFNIDYDCVSFCYMHHMELPTGVHAGTDLEGKFYGPFVDRQTAQAAGTDTTITLNVLAWLYAAVINGDRWFLNRFTTTLNDFNLVAMKYNYEPLTQDHVDILGPLSAQTGIAVLDMCAALKELLQNGMNGRTILGSTILEDEFTPFDVVRQCSGVTFQGKFKKIVKGTHHWMLLTFLTSLLILVQSTQWSLFFFVYENAFLPFTLGIMAIAACAMLLVKHKHAFLCLFLLPSLATVAYFNMVYMPASWVMRIMTWLELADTSLSGYRLKDCVMYASALVLLVLMTARTVYDDAARRVWTLMNVITLVYKVYYGNSLDQAISMWALVISVTSNYSGVVTTIMFLARAIVFVCVEYYPLLFITGNTLQCIMLVYCFLGYCCCCYFGLFCLLNRYFRLTLGVYDYLVSTQEFRYMNSQGLLPPKSSIDAFKLNIKLLGIGGKPCIKVATVQSKMSDVKCTSVVLLSVLQQLRVESSSKLWAQCVQLHNDILLAKDTTEAFEKMVSLLSVLLSMQGAVDINKLCEEMLDNRATLQAIASEFSSLPSYAAYATAQEAYEQAVANGDSEVVLKKLKKSLNVAKSEFDRDAAMQRKLEKMADQAMTQMYKQARSEDKRAKVTSAMQTMLFTMLRKLDNDALNNIINNARDGCVPLNIIPLTTAAKLMVVVPDYGTYKNTCDGNTFTYASALWEIQQVVDADSKIVQLSEINMDNSQNLAWPLIVTALRANSAVKLQNNELSPVALRQMSCAAGTTQTACTDDNALAYYNNSKGGRFVLALLSDHQDLKWARFPKSDGTGTIYTELEPPCRFVTDTPRGPKVKYLYFIKGLNNLNRGMVLGSLAATVRLQAGNATEVPANSAVLSFCAFAVDPAKAYKDYLASGGQPITNCVKMLCTHTGTGQAITVTPEANMDQESFGGASCCLYCRCHIDHPNPKGFCDLKGKYVQIPATCANDPVGFTLKNTVCTVCGTWKGYGCSCDQLREPMMQSADASTFLNRVCGVSAARLTPCGTGTSTDVVYRAFDIYNERVAGFAKFLKTNCCRFQEKDEEGNLLDSYFVVKRHTMSNYQHEETIYNLVKECPAVAVHDFFKFRVDGDMVPHISRQRLTKYTMADLVYALRHFDEGNCDTLKEILVTYNCCDDDYFNKKDWYDFVENPDILRVYANLGERVRQALLKTVQFCDAMRDAGIVGVLTLDNQDLNGNWYDFGDFVQVAPGCGVPIVDSYYSLLMPILTLTKALAAESHMDADLAKPLIKWDLLKYDFTEERLCLFDRYFKYWDQTYHPNCINCLDDRCILHCANFNVLFSTVFPPTSFGPLVRKIFVDGVPFVVSTGYHFRELGVVHNQDVNLHSSRLSFKELLVYAADPAMHAASGNLLLDKRTTCFSVAALTNNVAFQTVKPGNFNKDFYDFAVSKGFFKEGSSVELKHFFFAQDGNAAISDYDYYRYNLPTMCDIRQLLFVVEVVDKYFDCYDGGCINANQVIVNNLDKSAGFPFNKWGKARLYYDSMSYEDQDVLFAYTKRNVIPTITQMNLKYAISAKNRARTVAGVSICSTMTNRQFHQKLLKSIAATRGATVVIGTSKFYGGWHNMLKTVYSDVETPHLMGWDYPKCDRAMPNMLRIMASLVLARKHSTCCNLSHRFYRLANECAQVLSEMVMCGGSLYVKPGGTSSGDATTAYANSVFNICQAVTANVNALLSTDGNKIADKYVRNLQHRLYECLYRNRDVDHEFVDEFYAYLRKHFSMMILSDDAVVCYNSNYAAQGLVASIKNFKAVHYYQNNVFMSEAKCWTETDLTKGPHEFCSQHTMLVKQGDDYVYLPYPDPSRILGAGCFVDDIVKTDGTLMIERFVSLAIDAYPLTKHPNQEYADVFHLYLQYIRKLHDELTGHMLDMYSVMLTNDNTSRYWEPEFYEAMYTPHTVLQAVGACVLCNSQTSLRCGACIRRPFLCCKCCYDHVISTSHKLVLSVNPYVCNAPGCDVTDVTQLYLGGMSYYCKLHKPPISFPLCANGQVFGLYKNTCVGSDNVTDFNAIATCDWTNAGDYILANTCTERLKLFAAETLKATEETFKLSYGIATVREVLSDRELHLSWEVGKPRPPLNRNYVFTGYRVTKNSKVQIGEYTFEKGDYGDAVVYRGTTTYKLNVGDYFVLTSHTVMPLSAPTLVPQEHYVRITGLYPTLNISDEFSSNVANYQKVGMQKYSTLQGPPGTGKSHFAIGLALYYPSARIVYTACSHAAVDALCEKALKYLPIDKCSRIIPARARVECFDKFKVNSTLEQYVFCTVNALPETTADIVVFDEISMATNYDLSVVNARLRAKHYVYIGDPAQLPAPRTLLTKGTLEPEYFNSVCRLMKTIGPDMFLGTCRRCPAEIVDTVSALVYDNKLKAHKEKSAQCFKMFYKGVITHDVSSAINRPQIGVVREFLTRNPAWRKAVFISPYNSQNAVASKILGLPTQTVDSSQGSEYDYVIFTQTTETAHSCNVNRFNVAITRAKIGILCIMSDRDLYDKLQFTSLEVPRRNVATLQAENVTGLFKDCSKIITGLHPTQAPTHLSVDTKFKTEGLCVDIPGIPKDMTYRRLISMMGFKMNYQVNGYPNMFITREEAIRHVRAWIGFDVEGCHATRDAVGTNLPLQLGFSTGVNLVAVPTGYVDTENNTEFTRVNAKPPPGDQFKHLIPLMYKGLPWNVVRIKIVQMLSDTLKGLSDRVVFVLWAHGFELTSMKYFVKIGPERTCCLCDRRATCFSTSSDTYACWNHSVGFDYVYNPFMIDVQQWGFTGNLQSNHDQHCQVHGNAHVASCDAIMTRCLAVHECFVKRVDWSVEYPIIGDELKINAACRKVQHMVVKSALLADKFSVLHDIGNPKAIKCVPQAEVDWKFYDAQPCSDKAYKIEELFYSYATHHDKFTDGVCLFWNCNVDRYPANAIVCRFDTRVLSNLNLPGCDGGSLYVNKHAFHTPAFDKSAFTYLKQLPFFYYSDSPCESHGKQVVSDIDYVPLKSATCITRCNLGGAVCRRHANEYRQYLDAYNMMISAGFSLWIYKQFDTYNLWNTFTRLQSLENVAYNVVNKGHFDGQIGEAPVSIINNAVYTKVDGNDVEIFENKTTLPVNVAFELWAKRNIKPVPEIKILNNLGVDIAANTVIWDYKREAPAHVSTIGVCTMTDIAKKPTESACSSLTVLFDGRVEGQVDLFRNARNGVLITEGSVKGLTPSKGPAQASVNGVTLIGESVKTQFNYFKKVDGIIQQLPETYFTQSRDLEDFKPRSKMETDFLELAMDEFIQRYKLEGYAFEHIVYGDFSHGQLGGLHLMIGLAKRSQDSPLKLEDFIPTDSTVKNYFITDAQTGSSKCVCSVIDLLLDDFVEIIKSQDLSVISKVVKVTIDYAEISFMLWCKDGHVETFYPKLQASQAWQPGVAMPNLYKMQRMLLEKCDLQNYGENAVIPKGIMMNVAKYTQLCQYLNTLTLAVPYNMRVIHFGAGSDKGVAPGTAVLRQWLPTGALLVDSDLNDFVSDADSTLIGDCATVHTANKWDLIISDMYDPKTKHVTKENDSKEGFFTYLCGFIKQKLALGGSVAVKITEHSWNADLYKLMGHFSWWTAFVTNVNASSSEAFLIGVNYLGKLREQIDGYTMHANYIFWRNTNPIQLSSYSLFDMSKFPLKLRGTAVMSLKENQINDMIYSLLENGRLIIRENNRVVVSSDILVNN.

Residues 12 to 127 (THVQLSLPVL…YRNVLLRKNG (116 aa)) enclose the CoV Nsp1 globular domain. The BetaCoV Nsp1 C-terminal domain maps to 148–179 (ELGTDPIEDYEQNWNTKHGGGVLRELIRELNG). The 274-residue stretch at 183 to 456 (TRYVDNNFCG…NEDLMEILNR (274 aa)) folds into the CoV Nsp2 N-terminal domain. Residues Cys200, Cys231, His234, His236, Cys323, Cys326, Cys341, Cys344, Cys370, Cys373, His382, and Cys416 each contribute to the Zn(2+) site. The tract at residues 200 to 236 (CIKDLLARAGKSMCTLSEQLDYIESKRGVYCCREHEH) is C2H2. A C4 region spans residues 323–344 (CNHCDEVSWQTCDFLKATCEQC). A C2HC region spans residues 370-416 (CPACQDPEVGPEHSVADYHNHSNIETRLRKGGRTKCFGGCVFAYVGC). One can recognise a CoV Nsp2 middle domain in the interval 458–688 (RVNINIVGDF…LDVLNKALEM (231 aa)). One can recognise a CoV Nsp2 C-terminal domain in the interval 690–818 (IDQVIIAGAK…TNNVFSLKGG (129 aa)). Positions 822-930 (KGVTFGEDTV…MYCSFYPPDE (109 aa)) constitute a Ubiquitin-like 1 domain. 3 Macro domains span residues 1001 to 1167 (VNQF…LGYL), 1213 to 1341 (KFKA…LPSK), and 1349 to 1476 (ILGT…TSSS). The region spanning 1478–1544 (TSEEHFIETV…LLDKLKSLLS (67 aa)) is the DPUP domain. The Ubiquitin-like 2 domain maps to 1548–1603 (VRTIKVFTTVDNTNLHTQIVDMSMTYGQQFGPTYLDGADVTKIKPHAKHEGKTFFV). Positions 1617-1881 (YYHTLDESFL…YTEIQPKLDE (265 aa)) constitute a Peptidase C16 domain. Cys1657 (for PL-PRO activity) is an active-site residue. Zn(2+)-binding residues include Cys1735, Cys1738, Cys1770, and Cys1772. The C4-type zinc-finger motif lies at 1735–1772 (CKTCGQKSTTLTGVEAVMYMGTLSYEELKTGVTIPCIC). Catalysis depends on for PL-PRO activity residues His1818 and Asp1832. The Nucleic acid-binding domain maps to 1894 to 2004 (PIDLVPTQPL…CLWSTKPVET (111 aa)). Residues 2029 to 2138 (PTSEEVVENP…LGQAAVTTTN (110 aa)) enclose the G2M domain. The tract at residues 2098–2377 (LALGLRTLAT…IFFAFCYYVW (280 aa)) is HD1. Residues 2209-2229 (LFTIAMWLLLLSICLGSLIYV) traverse the membrane as a helical segment. The 3Ecto domain occupies 2230 to 2300 (TAAFGVLLSN…QVTISSYKLD (71 aa)). Intrachain disulfides connect Cys2246/Cys2274 and Cys2265/Cys2271. The next 2 membrane-spanning stretches (helical) occupy residues 2310 to 2330 (WFLA…SAIM) and 2357 to 2377 (MAPV…YYVW). The tract at residues 2378–2468 (KSYVHIMDGC…QFKRPINPTD (91 aa)) is Y1. The CoV Nsp3 Y domain maps to 2378 to 2746 (KSYVHIMDGC…ITTKISLKGG (369 aa)). Residues His2382, Cys2387, Cys2392, Cys2395, Cys2428, His2431, Cys2435, and Cys2438 each coordinate Zn(2+). A ZF1 region spans residues 2382-2395 (HIMDGCTSSTCMMC). Residues 2428 to 2438 (CKAHNWNCLNC) are ZF2. Positions 2469–2563 (QSSYVVDSVA…LLDQALVSDV (95 aa)) are Y2. Residues 2469–2746 (QSSYVVDSVA…ITTKISLKGG (278 aa)) are coV-Y. The tract at residues 2564-2645 (GDSTEVSVKM…ECLKLSHHSD (82 aa)) is Y3. A Y4 region spans residues 2646 to 2746 (LEVTGDSCNN…ITTKISLKGG (101 aa)). Transmembrane regions (helical) follow at residues 2761–2781 (LLCV…SLSV), 2998–3018 (PGVF…TPLV), 3028–3048 (ASVV…YYFM), 3060–3080 (VVAA…LAPA), 3083–3103 (FLPG…TNDV), 3111–3131 (WFAM…VFCI), and 3148–3168 (VMFN…TFLL). Residues 2761–3168 (LLCVLAALFC…EEAALCTFLL (408 aa)) form an HD2 region. The Nsp4C domain maps to 3148–3246 (VMFNGVTFST…QTSITSAVLQ (99 aa)). Residues 3247 to 3552 (SGFRKMAFPS…VRQCSGVTFQ (306 aa)) enclose the Peptidase C30 domain. Catalysis depends on for 3CL-PRO activity residues His3287 and Cys3391. The next 7 helical transmembrane spans lie at 3570 to 3590 (FLTS…FFVY), 3592 to 3612 (NAFL…MLLV), 3618 to 3638 (FLCL…MVYM), 3665 to 3684 (CVMY…RTVY), 3691 to 3710 (VWTL…GNSL), 3734 to 3754 (IMFL…LLFI), and 3762 to 3782 (IMLV…LFCL). Residues 3570–3782 (FLTSLLILVQ…CCCYFGLFCL (213 aa)) form an HD3 region. In terms of domain architecture, RdRp Nsp7 cofactor spans 3843-3925 (SKMSDVKCTS…EMLDNRATLQ (83 aa)). Residues 3926–4123 (AIASEFSSLP…LRANSAVKLQ (198 aa)) enclose the RdRp Nsp8 cofactor domain. A Nsp9 ssRNA-binding domain is found at 4124 to 4236 (NNELSPVALR…GSLAATVRLQ (113 aa)). The ExoN/MTase coactivator domain maps to 4237–4375 (AGNATEVPAN…CDQLREPMMQ (139 aa)). 8 residues coordinate Zn(2+): Cys4310, Cys4313, His4319, Cys4326, Cys4353, Cys4356, Cys4364, and Cys4366. Zinc fingers lie at residues 4310-4326 (CLYC…KGFC) and 4353-4366 (CTVC…GCSC). Positions 4382 to 4636 (FLNRVCGVSA…AAESHMDADL (255 aa)) constitute a NiRAN domain. Residues Asn4584 and Asp4593 each contribute to the Mn(2+) site. Residues 4641 to 4739 (IKWDLLKYDF…HNQDVNLHSS (99 aa)) form the Nsp12 Interface domain. His4670, Cys4676, Cys4681, Cys4685, and Cys4862 together coordinate Zn(2+). A Nsp12 RNA-dependent RNA polymerase domain is found at 4740–5307 (RLSFKELLVY…AMYTPHTVLQ (568 aa)). A rdRp Fingers N-ter region spans residues 4742–4956 (SFKELLVYAA…HQKLLKSIAA (215 aa)). The interval 4957-4995 (TRGATVVIGTSKFYGGWHNMLKTVYSDVETPHLMGWDYP) is rdRp Palm N-ter. Positions 4987–5149 (PHLMGWDYPK…CYNSNYAAQG (163 aa)) constitute a RdRp catalytic domain. Positions 4996–5054 (KCDRAMPNMLRIMASLVLARKHSTCCNLSHRFYRLANECAQVLSEMVMCGGSLYVKPGG) are rdRp Fingers C-ter. Zn(2+) contacts are provided by His5017, Cys5020, and Cys5021. The interval 5055–5190 (TSSGDATTAY…TKGPHEFCSQ (136 aa)) is rdRp Palm C-ter. Active-site residues include Ser5134, Asp5135, and Asp5136. The interval 5191–5307 (HTMLVKQGDD…AMYTPHTVLQ (117 aa)) is rdRp Thumb. Residues 5308–5420 (AVGACVLCNS…TDFNAIATCD (113 aa)) form the CV ZBD domain. Zn(2+) contacts are provided by Cys5312, Cys5315, Cys5323, Cys5326, Cys5333, Cys5336, His5340, His5346, Cys5357, Cys5362, Cys5379, and His5382. In terms of domain architecture, (+)RNA virus helicase ATP-binding spans 5564-5745 (NISDEFSSNV…MKTIGPDMFL (182 aa)). 5589 to 5596 (GPPGTGKS) contacts ATP. The region spanning 5746-5915 (GTCRRCPAEI…TLQAENVTGL (170 aa)) is the (+)RNA virus helicase C-terminal domain. In terms of domain architecture, ExoN spans 5980–6195 (MFITREEAIR…RCLAVHECFV (216 aa)). Catalysis depends on residues Asp5998, Glu6000, and Glu6099. Cys6115, Cys6118, Cys6134, His6137, His6165, Cys6169, and His6172 together coordinate Zn(2+). Active-site residues include His6176 and Asp6181. Position 6187 (Cys6187) interacts with Zn(2+). The N7-MTase domain maps to 6204–6435 (YPIIGDELKI…NLWNTFTRLQ (232 aa)). 6239-6245 (DIGNPKA) is an S-adenosyl-L-methionine binding site. The gpppA-binding stretch occupies residues 6322 to 6336 (CDGGSLYVNKHAFHT). Cys6360, Cys6381, Cys6392, and His6395 together coordinate Zn(2+). The Nsp15 N-terminal oligomerization domain occupies 6436–6496 (SLENVAYNVV…NVAFELWAKR (61 aa)). Positions 6497–6622 (NIKPVPEIKI…YFKKVDGIIQ (126 aa)) constitute an AV-Nsp11N/CoV-Nsp15M domain. In terms of domain architecture, NendoU spans 6639-6778 (KPRSKMETDF…KDGHVETFYP (140 aa)). Residues His6669, His6684, Lys6724, Lys6827, Asp6911, Lys6951, and Glu6984 contribute to the active site. Residues 6783–7077 (SQAWQPGVAM…RVVVSSDILV (295 aa)) form the Nidovirus-type SAM-dependent 2'-O-MTase domain.

Belongs to the coronaviruses polyprotein 1ab family. Interacts with host PHB and PHB2. In terms of assembly, interacts with papain-like protease nsp3 and non-structural protein 6. As to quaternary structure, monomer. Homodimer. Only the homodimer shows catalytic activity. Interacts with nsp8 and nsp12 to form the replication-transcription complex (RTC): nsp12, nsp7, two subunits of nsp8, and up to two subunits of nsp13. In terms of assembly, interacts with nsp7, nsp13 and nsp12 to form the replication-transcription complex (RTC): nsp12, nsp7, two subunits of nsp8, and up to two subunits of nsp13. As to quaternary structure, interacts with nsp12. Interacts with proofreading exoribonuclease nsp14 and 2'-O-methyltransferase nsp16; these interactions enhance nsp14 and nsp16 enzymatic activities. In terms of assembly, interacts with nsp7 and nsp8 to form the replication-transcription complex (RTC): nsp12, nsp7, two subunits of nsp8, and up to two subunits of nsp13. Interacts with nsp9. As to quaternary structure, interacts with nsp8 to form the replication-transcription complex (RTC): nsp12, nsp7, two subunits of nsp8, and up to two subunits of nsp13. Requires Mn(2+) as cofactor. Mg(2+) is required as a cofactor. Post-translationally, specific enzymatic cleavages in vivo by its own proteases yield mature proteins. 3CL-PRO and PL-PRO proteinases are autocatalytically processed.

The protein resides in the host membrane. It is found in the host cytoplasm. Its subcellular location is the host perinuclear region. The protein localises to the host endoplasmic reticulum-Golgi intermediate compartment. It catalyses the reaction RNA(n) + a ribonucleoside 5'-triphosphate = RNA(n+1) + diphosphate. The enzyme catalyses ATP + H2O = ADP + phosphate + H(+). It carries out the reaction Thiol-dependent hydrolysis of ester, thioester, amide, peptide and isopeptide bonds formed by the C-terminal Gly of ubiquitin (a 76-residue protein attached to proteins as an intracellular targeting signal).. The catalysed reaction is a 5'-end (N(7)-methyl 5'-triphosphoguanosine)-ribonucleoside in mRNA + S-adenosyl-L-methionine = a 5'-end (N(7)-methyl 5'-triphosphoguanosine)-(2'-O-methyl-ribonucleoside) in mRNA + S-adenosyl-L-homocysteine + H(+). It catalyses the reaction uridylyl-uridylyl-ribonucleotide-RNA = a 3'-end uridylyl-2',3'-cyclophospho-uridine-RNA + a 5'-end dephospho-ribonucleoside-RNA. The enzyme catalyses a 5'-end diphospho-ribonucleoside in mRNA + GTP + H(+) = a 5'-end (5'-triphosphoguanosine)-ribonucleoside in mRNA + diphosphate. It carries out the reaction a 5'-end (5'-triphosphoguanosine)-ribonucleoside in mRNA + S-adenosyl-L-methionine = a 5'-end (N(7)-methyl 5'-triphosphoguanosine)-ribonucleoside in mRNA + S-adenosyl-L-homocysteine. Its function is as follows. The replicase polyprotein of coronaviruses is a multifunctional protein: it contains the activities necessary for the transcription of negative stranded RNA, leader RNA, subgenomic mRNAs and progeny virion RNA as well as proteinases responsible for the cleavage of the polyprotein into functional products. Inhibits host translation by interacting with the 40S ribosomal subunit. The nsp1-40S ribosome complex further induces an endonucleolytic cleavage near the 5'UTR of host mRNAs, targeting them for degradation. Viral mRNAs are not susceptible to nsp1-mediated endonucleolytic RNA cleavage thanks to the presence of a 5'-end leader sequence and are therefore protected from degradation. By suppressing host gene expression, nsp1 facilitates efficient viral gene expression in infected cells and evasion from host immune response. In terms of biological role, may play a role in the modulation of host cell survival signaling pathway by interacting with host PHB and PHB2. Indeed, these two proteins play a role in maintaining the functional integrity of the mitochondria and protecting cells from various stresses. Functionally, responsible for the cleavages located at the N-terminus of the replicase polyprotein. In addition, PL-PRO possesses a deubiquitinating/deISGylating activity and processes both 'Lys-48'- and 'Lys-63'-linked polyubiquitin chains from cellular substrates. Participates together with nsp4 in the assembly of virally-induced cytoplasmic double-membrane vesicles necessary for viral replication. Antagonizes innate immune induction of type I interferon by blocking the phosphorylation, dimerization and subsequent nuclear translocation of host IRF3. Also prevents host NF-kappa-B signaling. Its function is as follows. Participates in the assembly of virally-induced cytoplasmic double-membrane vesicles necessary for viral replication. Cleaves the C-terminus of replicase polyprotein at 11 sites. Recognizes substrates containing the core sequence [ILMVF]-Q-|-[SGACN]. Also able to bind an ADP-ribose-1''-phosphate (ADRP). In terms of biological role, plays a role in the initial induction of autophagosomes from host endoplasmic reticulum. Later, limits the expansion of these phagosomes that are no longer able to deliver viral components to lysosomes. Functionally, forms a hexadecamer with nsp8 (8 subunits of each) that may participate in viral replication by acting as a primase. Alternatively, may synthesize substantially longer products than oligonucleotide primers. Its function is as follows. Forms a hexadecamer with nsp7 (8 subunits of each) that may participate in viral replication by acting as a primase. Alternatively, may synthesize substantially longer products than oligonucleotide primers. Forms a primer, NSP9-pU, which is utilized by the polymerase for the initiation of RNA chains. Interacts with ribosome signal recognition particle RNA (SRP). Together with NSP8, suppress protein integration into the cell membrane, thereby disrupting host immune defenses. In terms of biological role, plays a pivotal role in viral transcription by stimulating both nsp14 3'-5' exoribonuclease and nsp16 2'-O-methyltransferase activities. Therefore plays an essential role in viral mRNAs cap methylation. Functionally, RNA-directed RNA polymerase that catalyzes the transcription of viral genomic and subgenomic RNAs. Acts in complex with nsp7 and nsp8 to transcribe both the minus and positive strands of genomic RNA. The kinase-like NiRAN domain of NSP12 attaches one or more nucleotides to the amino terminus of NSP9, forming a covalent RNA-protein intermediate that serves as transcription/replication primer. Subgenomic RNAs (sgRNAs) are formed by discontinuous transcription: The polymerase has the ability to pause at transcription-regulating sequences (TRS) and jump to the leader TRS, resulting in a major deletion. This creates a series of subgenomic RNAs that are replicated, transcribed and translated. In addition, Nsp12 is a subunit of the viral RNA capping enzyme that catalyzes the RNA guanylyltransferase reaction for genomic and sub-genomic RNAs. Subsequently, the NiRAN domain transfers RNA to GDP, and forms the core cap structure GpppA-RNA. Its function is as follows. Multi-functional protein with a zinc-binding domain in N-terminus displaying RNA and DNA duplex-unwinding activities with 5' to 3' polarity. Activity of helicase is dependent on magnesium. Plays a role in viral RNA synthesis through two distinct activities. The N7-guanine methyltransferase activity plays a role in the formation of the cap structure GpppA-RNA. The proofreading exoribonuclease reduces the sensitivity of the virus to RNA mutagens during replication. This activity acts on both ssRNA and dsRNA in a 3'-5' direction. In terms of biological role, plays a role in viral transcription/replication and prevents the simultaneous activation of host cell dsRNA sensors, such as MDA5/IFIH1, OAS, and PKR. Acts by degrading the 5'-polyuridines generated during replication of the poly(A) region of viral genomic and subgenomic RNAs. Catalyzes a two-step reaction in which a 2'3'-cyclic phosphate (2'3'-cP) is first generated by 2'-O transesterification, which is then hydrolyzed to a 3'-phosphate (3'-P). If not degraded, poly(U) RNA would hybridize with poly(A) RNA tails and activate host dsRNA sensors. Functionally, methyltransferase that mediates mRNA cap 2'-O-ribose methylation to the 5'-cap structure of viral mRNAs. N7-methyl guanosine cap is a prerequisite for binding of nsp16. Therefore plays an essential role in viral mRNAs cap methylation which is essential to evade immune system. The protein is Replicase polyprotein 1ab (rep) of Bat coronavirus 279/2005 (BtCoV).